We begin with the raw amino-acid sequence, 120 residues long: QTIATGSPPIAGTSDLSTITSAATPTFTTEQDGREQGDGLQLAHDFSQPVITVIILGVMAGIIGIILLLAYVSRRLRKRPPADVPPPASTVPSADAPPPVSEDDETSLTSVETDYPGDSQ.

Glutamine 1 carries the post-translational modification Pyrrolidone carboxylic acid. Residues 1–40 (QTIATGSPPIAGTSDLSTITSAATPTFTTEQDGREQGDGL) are disordered. Threonine 2 and threonine 5 each carry an O-linked (GalNAc...) threonine glycan. Serine 7 carries an O-linked (GalNAc...) serine glycan. A glycan (O-linked (GalNAc...) threonine) is linked at threonine 13. Serine 17 carries O-linked (GalNAc...) serine glycosylation. The segment covering 17–29 (STITSAATPTFTT) has biased composition (low complexity). 2 O-linked (GalNAc...) threonine glycosylation sites follow: threonine 18 and threonine 20. The O-linked (GalNAc...) serine glycan is linked to serine 21. O-linked (GalNAc...) threonine glycosylation is found at threonine 24 and threonine 28. Residues 50–72 (VITVIILGVMAGIIGIILLLAYV) form a helical membrane-spanning segment. The interval 78-120 (KRPPADVPPPASTVPSADAPPPVSEDDETSLTSVETDYPGDSQ) is disordered. Pro residues predominate over residues 82 to 100 (ADVPPPASTVPSADAPPPV). The span at 107–120 (SLTSVETDYPGDSQ) shows a compositional bias: polar residues. At serine 119 the chain carries Phosphoserine.

The protein belongs to the glycophorin-A family. As to quaternary structure, homodimer.

It is found in the membrane. Glycophorin A is the major intrinsic membrane sialoglycoprotein of the erythrocyte. Appears to be important for the function of SLC4A1 and is required for high activity of SLC4A1. May be involved in translocation of SLC4A1 to the plasma membrane. The sequence is that of Glycophorin-A from Equus caballus (Horse).